A 247-amino-acid polypeptide reads, in one-letter code: UPF0280 protein MmarC7_0482 (247 aa).

This sequence belongs to the UPF0280 family.

In Methanococcus maripaludis (strain C7 / ATCC BAA-1331), this protein is UPF0280 protein MmarC7_0482.